The following is a 580-amino-acid chain: MVENLKQLQERVAVSDGRAKADLVIKNGRIINVFSGEIMDGDIAIKNGYIAGIGSFPDAEKIIDAAGAFIAPGFIDAHVHVESAMVTPAEFARVLLPNGVTTIVTDPHEIANVAGEKGIEFMLEDAKGAPLDMFVMLPSSVPATEGEHNGETLHAEKLHPLYRHEKVIGLAEVMDFPSVAKGSDDILRKIIDAKKEGGRIDGHGAGLTSADLNNYLAVGIRTDHESTTAKEATDRLRAGMFVMLREGTVGRDLLQTIPAVSEKNSHRFCFCTDDKLINDLITEGSINYNIKLAIKNGIDPITAIQMATINAANCHNLPYLGAVAAGYQADIVFLTDIETVEISKVLKNGEVVVDNGVRNEAAFKQQAAVPFVSPPINHHVHLQDLALPLTKETCYVIGMQPNSLFTEKRIEQVTIQGGKFVPTVENDLLKMAVVERHHDTGCVGVGIVKGFGLTEGAIATTVAHDSHNIVAVGVSDEAMKAAIDHITQTGGGIAVVNGAGQVLHDLALPIAGLLSDKSYEEVENDLAGLLNAFKQISTANGFDPFLTLSFLTLPVIPELKLTDQGLFDFATFQIISNEVN.

It belongs to the metallo-dependent hydrolases superfamily. Adenine deaminase family. Requires Mn(2+) as cofactor.

The catalysed reaction is adenine + H2O + H(+) = hypoxanthine + NH4(+). In Listeria monocytogenes serovar 1/2a (strain ATCC BAA-679 / EGD-e), this protein is Adenine deaminase.